The following is a 209-amino-acid chain: Uracil phosphoribosyltransferase (209 aa).

5-phospho-alpha-D-ribose 1-diphosphate is bound by residues arginine 79, arginine 104, and 131-139 (DPMLATGNS). Residues isoleucine 194 and 199–201 (GDA) each bind uracil. A 5-phospho-alpha-D-ribose 1-diphosphate-binding site is contributed by aspartate 200.

This sequence belongs to the UPRTase family. Requires Mg(2+) as cofactor.

It catalyses the reaction UMP + diphosphate = 5-phospho-alpha-D-ribose 1-diphosphate + uracil. Its pathway is pyrimidine metabolism; UMP biosynthesis via salvage pathway; UMP from uracil: step 1/1. With respect to regulation, allosterically activated by GTP. Functionally, catalyzes the conversion of uracil and 5-phospho-alpha-D-ribose 1-diphosphate (PRPP) to UMP and diphosphate. The sequence is that of Uracil phosphoribosyltransferase from Rhizobium etli (strain CIAT 652).